We begin with the raw amino-acid sequence, 50 residues long: Phospholipase A2 trimorphin (50 aa).

Residues Tyr28, Gly30, and Gly32 each coordinate Ca(2+). Cys29 and Cys45 are oxidised to a cystine. Residue His48 is part of the active site. Asp49 contacts Ca(2+).

Ca(2+) is required as a cofactor. In terms of tissue distribution, expressed by the venom gland.

It is found in the secreted. The enzyme catalyses a 1,2-diacyl-sn-glycero-3-phosphocholine + H2O = a 1-acyl-sn-glycero-3-phosphocholine + a fatty acid + H(+). Inhibited by EDTA. In terms of biological role, PLA2 catalyzes the calcium-dependent hydrolysis of the 2-acyl groups in 3-sn-phosphoglycerides. The polypeptide is Phospholipase A2 trimorphin (Trimorphodon lambda (Sonoran lyre snake)).